A 275-amino-acid polypeptide reads, in one-letter code: Methylesterase 10 (275 aa).

Ser-96 serves as the catalytic Acyl-ester intermediate. Active-site charge relay system residues include Asp-225 and His-253.

Belongs to the AB hydrolase superfamily. Methylesterase family.

It carries out the reaction methyl (-)-jasmonate + H2O = jasmonate + methanol + H(+). Its pathway is plant hormone biosynthesis. It functions in the pathway lipid metabolism; oxylipin biosynthesis. Methylesterase shown to have methyl jasmonate (MeJA) esterase activity in vitro. The protein is Methylesterase 10 of Arabidopsis thaliana (Mouse-ear cress).